Reading from the N-terminus, the 944-residue chain is Lactoferrin-binding protein A (944 aa).

Residues 1–27 (MNKKHGFSLTLTALAIAAAFPSYAANP) form the signal peptide. A TBDR plug domain is found at 52–178 (RRSKEATGLG…LGGAVAFRTK (127 aa)). A TBDR beta-barrel domain is found at 189-944 (SWGIQAKTAY…NFSLALEMKF (756 aa)). A TonB C-terminal box motif is present at residues 927–944 (GRYAAPGRNFSLALEMKF).

This sequence belongs to the TonB-dependent receptor family.

It localises to the cell outer membrane. Unknown. May be an iron-siderophore receptor. The protein is Lactoferrin-binding protein A (lbpA) of Neisseria meningitidis serogroup A / serotype 4A (strain DSM 15465 / Z2491).